The following is a 1119-amino-acid chain: DNA-directed RNA polymerase subunit beta (1119 aa).

Belongs to the RNA polymerase beta chain family. As to quaternary structure, the RNAP catalytic core consists of 2 alpha, 1 beta, 1 beta' and 1 omega subunit. When a sigma factor is associated with the core the holoenzyme is formed, which can initiate transcription.

The catalysed reaction is RNA(n) + a ribonucleoside 5'-triphosphate = RNA(n+1) + diphosphate. Functionally, DNA-dependent RNA polymerase catalyzes the transcription of DNA into RNA using the four ribonucleoside triphosphates as substrates. This Thermus thermophilus (strain ATCC BAA-163 / DSM 7039 / HB27) protein is DNA-directed RNA polymerase subunit beta.